The chain runs to 487 residues: Glutamyl-tRNA(Gln) amidotransferase subunit A (487 aa).

Residues K77 and S152 each act as charge relay system in the active site. S176 functions as the Acyl-ester intermediate in the catalytic mechanism.

Belongs to the amidase family. GatA subfamily. In terms of assembly, heterotrimer of A, B and C subunits.

It carries out the reaction L-glutamyl-tRNA(Gln) + L-glutamine + ATP + H2O = L-glutaminyl-tRNA(Gln) + L-glutamate + ADP + phosphate + H(+). In terms of biological role, allows the formation of correctly charged Gln-tRNA(Gln) through the transamidation of misacylated Glu-tRNA(Gln) in organisms which lack glutaminyl-tRNA synthetase. The reaction takes place in the presence of glutamine and ATP through an activated gamma-phospho-Glu-tRNA(Gln). The protein is Glutamyl-tRNA(Gln) amidotransferase subunit A of Limosilactobacillus fermentum (strain NBRC 3956 / LMG 18251) (Lactobacillus fermentum).